The primary structure comprises 295 residues: Pyridoxal 5'-phosphate synthase subunit PdxS (295 aa).

Aspartate 25 serves as a coordination point for D-ribose 5-phosphate. The Schiff-base intermediate with D-ribose 5-phosphate role is filled by lysine 82. Glycine 154 contacts D-ribose 5-phosphate. Position 166 (arginine 166) interacts with D-glyceraldehyde 3-phosphate. Residues glycine 215 and 236–237 (GS) contribute to the D-ribose 5-phosphate site.

The protein belongs to the PdxS/SNZ family. In terms of assembly, in the presence of PdxT, forms a dodecamer of heterodimers.

It carries out the reaction aldehydo-D-ribose 5-phosphate + D-glyceraldehyde 3-phosphate + L-glutamine = pyridoxal 5'-phosphate + L-glutamate + phosphate + 3 H2O + H(+). The protein operates within cofactor biosynthesis; pyridoxal 5'-phosphate biosynthesis. Its function is as follows. Catalyzes the formation of pyridoxal 5'-phosphate from ribose 5-phosphate (RBP), glyceraldehyde 3-phosphate (G3P) and ammonia. The ammonia is provided by the PdxT subunit. Can also use ribulose 5-phosphate and dihydroxyacetone phosphate as substrates, resulting from enzyme-catalyzed isomerization of RBP and G3P, respectively. The chain is Pyridoxal 5'-phosphate synthase subunit PdxS from Staphylococcus epidermidis (strain ATCC 35984 / DSM 28319 / BCRC 17069 / CCUG 31568 / BM 3577 / RP62A).